The primary structure comprises 452 residues: Inner membrane metabolite transport protein YdjE (452 aa).

At 1–20 (MEQYDQIGARLDRLPLARFH) the chain is on the cytoplasmic side. Residues 21–43 (YRIFGIISFSLLLTGFLSYSGNV) traverse the membrane as a helical segment. The Periplasmic segment spans residues 44-57 (VLAKLVSNGWSNNF). The chain crosses the membrane as a helical span at residues 58 to 80 (LNAAFTSALMFGYFIGSLTGGFI). Residues 81 to 91 (GDYFGRRRAFR) are Cytoplasmic-facing. The chain crosses the membrane as a helical span at residues 92-114 (INLLIVGIAATGAAFVPDMYWLI). At 115–117 (FFR) the chain is on the periplasmic side. The helical transmembrane segment at 118–140 (FLMGTGMGALIMVGYASFTEFIP) threads the bilayer. At 141–152 (ATVRGKWSARLS) the chain is on the cytoplasmic side. A helical transmembrane segment spans residues 153–175 (FVGNWSPMLSAAIGVVVIAFFSW). At 176-178 (RIM) the chain is on the periplasmic side. A helical transmembrane segment spans residues 179–198 (FLLGGIGILLAWFLSGKYFI). Over 199 to 265 (ESPRWLAGKG…KGEMLRRTLV (67 aa)) the chain is Cytoplasmic. Residues 266 to 288 (AITVLIAMNISLYTITVWIPTIF) traverse the membrane as a helical segment. Over 289-297 (VNSGIDVDK) the chain is Periplasmic. Residues 298-320 (SILMTAVIMIGAPVGIFIAALII) traverse the membrane as a helical segment. Over 321-326 (DHFPRR) the chain is Cytoplasmic. A helical transmembrane segment spans residues 327 to 344 (LFGSTLLIIIAVLGYIYS). Residues 345–353 (IQTTEWAIL) lie on the Periplasmic side of the membrane. A helical transmembrane segment spans residues 354-376 (IYGLVMIFFLYMYVCFASAVYIP). The Cytoplasmic segment spans residues 377–388 (ELWPTHLRLRGS). The chain crosses the membrane as a helical span at residues 389–411 (GFVNAVGRIVAVFTPYGVAALLT). Residues 412-415 (HYGS) are Periplasmic-facing. A helical transmembrane segment spans residues 416–438 (ITVFMVLGVMLLLCALVLSIFGI). Topologically, residues 439-452 (ETRKVSLEEISEVN) are cytoplasmic.

Belongs to the major facilitator superfamily. Sugar transporter (TC 2.A.1.1) family.

The protein resides in the cell inner membrane. In Escherichia coli (strain K12), this protein is Inner membrane metabolite transport protein YdjE (ydjE).